An 85-amino-acid polypeptide reads, in one-letter code: MAEPSADPTPTAKPAATLKKGALVRVNRTSYLGSVEASASDPRPPEYIFEGPGELLLVKGEYGQVRWRRPVPDVWLKLSQLEVFS.

This sequence belongs to the complex I NdhO subunit family. In terms of assembly, NDH-1 can be composed of about 15 different subunits; different subcomplexes with different compositions have been identified which probably have different functions.

The protein localises to the cellular thylakoid membrane. The catalysed reaction is a plastoquinone + NADH + (n+1) H(+)(in) = a plastoquinol + NAD(+) + n H(+)(out). The enzyme catalyses a plastoquinone + NADPH + (n+1) H(+)(in) = a plastoquinol + NADP(+) + n H(+)(out). Its function is as follows. NDH-1 shuttles electrons from an unknown electron donor, via FMN and iron-sulfur (Fe-S) centers, to quinones in the respiratory and/or the photosynthetic chain. The immediate electron acceptor for the enzyme in this species is believed to be plastoquinone. Couples the redox reaction to proton translocation, and thus conserves the redox energy in a proton gradient. Cyanobacterial NDH-1 also plays a role in inorganic carbon-concentration. This Synechococcus sp. (strain CC9311) protein is NAD(P)H-quinone oxidoreductase subunit O.